The primary structure comprises 136 residues: 14 kDa fusion protein (136 aa).

The interval 22-50 (EAWTTSRSSTGSANPSASRKPARYPRIHA) is disordered. The span at 24-38 (WTTSRSSTGSANPSA) shows a compositional bias: polar residues. N-linked (GlcNAc...) asparagine; by host glycosylation occurs at asparagine 86.

It belongs to the poxviruses fusion protein family. In terms of assembly, homotrimer, covalently linked.

Its subcellular location is the virion membrane. In terms of biological role, this protein appears to play an important role in virus penetration at the level of cell fusion. The N-terminal proximal region is essential for fusion ability. Essential in fusing the outermost of the two Golgi-derived membranes enveloping the virus with the plasma membrane, and in its subsequent release extracellularly. The protein is 14 kDa fusion protein of Vaccinia virus (strain WR 65-16) (VACV).